The sequence spans 288 residues: ATP synthase gamma chain (288 aa).

Belongs to the ATPase gamma chain family. F-type ATPases have 2 components, CF(1) - the catalytic core - and CF(0) - the membrane proton channel. CF(1) has five subunits: alpha(3), beta(3), gamma(1), delta(1), epsilon(1). CF(0) has three main subunits: a, b and c.

The protein resides in the cell inner membrane. In terms of biological role, produces ATP from ADP in the presence of a proton gradient across the membrane. The gamma chain is believed to be important in regulating ATPase activity and the flow of protons through the CF(0) complex. In Rickettsia bellii (strain OSU 85-389), this protein is ATP synthase gamma chain.